The sequence spans 333 residues: Aquaporin-1 (333 aa).

The segment at 1-26 is disordered; sequence MQKMSEKPLYRAAENPTRNADRRAGR. Transmembrane regions (helical) follow at residues 85 to 105 and 116 to 136; these read LAMF…HFTG and FHGF…GGII. An NPA 1 motif is present at residues 137–139; it reads NPA. The next 3 helical transmembrane spans lie at 156 to 176, 213 to 233, and 245 to 265; these read LVLV…VYLI, TGAI…FLSI, and LFPF…SYSA. The NPA 2 motif lies at 270–272; that stretch reads NPA. A helical membrane pass occupies residues 303 to 323; it reads WLFPYVGALFGAVMYQIFVGV.

Belongs to the MIP/aquaporin (TC 1.A.8) family.

The protein resides in the cell membrane. In terms of biological role, aquaglyceroporin that may modulate the water content and osmolytes during anhydrobiosis. In Milnesium tardigradum (Water bear), this protein is Aquaporin-1.